The following is a 190-amino-acid chain: UPF0316 protein Mboo_0605 (190 aa).

A run of 3 helical transmembrane segments spans residues 3–23 (IGTF…RIAE), 41–61 (LAAY…GLVL), and 67–87 (FWNL…GMEI).

The protein belongs to the UPF0316 family.

The protein resides in the cell membrane. In Methanoregula boonei (strain DSM 21154 / JCM 14090 / 6A8), this protein is UPF0316 protein Mboo_0605.